Reading from the N-terminus, the 390-residue chain is Magnesium-protoporphyrin IX monomethyl ester [oxidative] cyclase (390 aa).

The protein belongs to the AcsF family. It depends on Fe cation as a cofactor.

It catalyses the reaction Mg-protoporphyrin IX 13-monomethyl ester + 3 NADPH + 3 O2 + 2 H(+) = 3,8-divinyl protochlorophyllide a + 3 NADP(+) + 5 H2O. It functions in the pathway porphyrin-containing compound metabolism; chlorophyll biosynthesis (light-independent). Its function is as follows. Catalyzes the formation of the isocyclic ring in chlorophyll biosynthesis. Mediates the cyclase reaction, which results in the formation of divinylprotochlorophyllide (Pchlide) characteristic of all chlorophylls from magnesium-protoporphyrin IX 13-monomethyl ester (MgPMME). This Prochlorococcus marinus (strain MIT 9215) protein is Magnesium-protoporphyrin IX monomethyl ester [oxidative] cyclase.